A 435-amino-acid polypeptide reads, in one-letter code: Probable histidine--tRNA ligase, cytoplasmic (435 aa).

This sequence belongs to the class-II aminoacyl-tRNA synthetase family.

It is found in the cytoplasm. It carries out the reaction tRNA(His) + L-histidine + ATP = L-histidyl-tRNA(His) + AMP + diphosphate + H(+). The chain is Probable histidine--tRNA ligase, cytoplasmic from Encephalitozoon cuniculi (strain GB-M1) (Microsporidian parasite).